Here is an 86-residue protein sequence, read N- to C-terminus: Small ribosomal subunit protein bS16 (86 aa).

This sequence belongs to the bacterial ribosomal protein bS16 family.

This Thermoanaerobacter pseudethanolicus (strain ATCC 33223 / 39E) (Clostridium thermohydrosulfuricum) protein is Small ribosomal subunit protein bS16.